Consider the following 528-residue polypeptide: Peptide chain release factor 3 (528 aa).

One can recognise a tr-type G domain in the interval 10 to 280; sequence AKRRTFGIIS…IDMAPAPGPR (271 aa). Residues 19–26, 87–91, and 141–144 contribute to the GTP site; these read SHPDAGKT, DTPGH, and NKLD.

It belongs to the TRAFAC class translation factor GTPase superfamily. Classic translation factor GTPase family. PrfC subfamily.

Its subcellular location is the cytoplasm. Functionally, increases the formation of ribosomal termination complexes and stimulates activities of RF-1 and RF-2. It binds guanine nucleotides and has strong preference for UGA stop codons. It may interact directly with the ribosome. The stimulation of RF-1 and RF-2 is significantly reduced by GTP and GDP, but not by GMP. The polypeptide is Peptide chain release factor 3 (Desulfotalea psychrophila (strain LSv54 / DSM 12343)).